A 111-amino-acid chain; its full sequence is Cell cycle protein GpsB (111 aa).

The stretch at 38–72 forms a coiled coil; that stretch reads IKDYEAFHKEFDQLKQQNARLKRELEEQKVAATQV.

It belongs to the GpsB family. Forms polymers through the coiled coil domains. Interacts with PBP1, MreC and EzrA.

Its subcellular location is the cytoplasm. In terms of biological role, divisome component that associates with the complex late in its assembly, after the Z-ring is formed, and is dependent on DivIC and PBP2B for its recruitment to the divisome. Together with EzrA, is a key component of the system that regulates PBP1 localization during cell cycle progression. Its main role could be the removal of PBP1 from the cell pole after pole maturation is completed. Also contributes to the recruitment of PBP1 to the division complex. Not essential for septum formation. This is Cell cycle protein GpsB from Bacillus mycoides (strain KBAB4) (Bacillus weihenstephanensis).